Consider the following 290-residue polypeptide: Lipoyl synthase (290 aa).

[4Fe-4S] cluster contacts are provided by Cys-38, Cys-43, Cys-49, Cys-64, Cys-68, Cys-71, and Ser-277. Residues 50 to 266 (WSKGTATFLL…REIALDAGFR (217 aa)) form the Radical SAM core domain.

This sequence belongs to the radical SAM superfamily. Lipoyl synthase family. It depends on [4Fe-4S] cluster as a cofactor.

Its subcellular location is the cytoplasm. It carries out the reaction [[Fe-S] cluster scaffold protein carrying a second [4Fe-4S](2+) cluster] + N(6)-octanoyl-L-lysyl-[protein] + 2 oxidized [2Fe-2S]-[ferredoxin] + 2 S-adenosyl-L-methionine + 4 H(+) = [[Fe-S] cluster scaffold protein] + N(6)-[(R)-dihydrolipoyl]-L-lysyl-[protein] + 4 Fe(3+) + 2 hydrogen sulfide + 2 5'-deoxyadenosine + 2 L-methionine + 2 reduced [2Fe-2S]-[ferredoxin]. It functions in the pathway protein modification; protein lipoylation via endogenous pathway; protein N(6)-(lipoyl)lysine from octanoyl-[acyl-carrier-protein]: step 2/2. Catalyzes the radical-mediated insertion of two sulfur atoms into the C-6 and C-8 positions of the octanoyl moiety bound to the lipoyl domains of lipoate-dependent enzymes, thereby converting the octanoylated domains into lipoylated derivatives. The protein is Lipoyl synthase of Chlorobaculum tepidum (strain ATCC 49652 / DSM 12025 / NBRC 103806 / TLS) (Chlorobium tepidum).